Here is a 414-residue protein sequence, read N- to C-terminus: Serine hydroxymethyltransferase (414 aa).

Residues Leu-121 and 125 to 127 contribute to the (6S)-5,6,7,8-tetrahydrofolate site; that span reads GHL. Residue Lys-229 is modified to N6-(pyridoxal phosphate)lysine.

This sequence belongs to the SHMT family. Homodimer. It depends on pyridoxal 5'-phosphate as a cofactor.

It localises to the cytoplasm. It catalyses the reaction (6R)-5,10-methylene-5,6,7,8-tetrahydrofolate + glycine + H2O = (6S)-5,6,7,8-tetrahydrofolate + L-serine. It functions in the pathway one-carbon metabolism; tetrahydrofolate interconversion. The protein operates within amino-acid biosynthesis; glycine biosynthesis; glycine from L-serine: step 1/1. Its function is as follows. Catalyzes the reversible interconversion of serine and glycine with tetrahydrofolate (THF) serving as the one-carbon carrier. This reaction serves as the major source of one-carbon groups required for the biosynthesis of purines, thymidylate, methionine, and other important biomolecules. Also exhibits THF-independent aldolase activity toward beta-hydroxyamino acids, producing glycine and aldehydes, via a retro-aldol mechanism. The polypeptide is Serine hydroxymethyltransferase (Janthinobacterium sp. (strain Marseille) (Minibacterium massiliensis)).